A 316-amino-acid chain; its full sequence is Leucine-rich repeat-containing protein 73 (316 aa).

LRR repeat units follow at residues 57–78 (SLAQ…KQLA), 86–106 (SIQS…ALLN), 114–137 (ALVA…CGLL), 145–166 (GLKE…SRLA), 174–187 (QVRV…PLGD), 202–223 (TLEV…TLLD), and 231–250 (ALRS…QQQI). Positions 257-296 (GEEEEEMAGGAADTQEWGRGREPAAHQRGGSSWKCPSDPN) are disordered. The span at 272-281 (EWGRGREPAA) shows a compositional bias: basic and acidic residues.

The chain is Leucine-rich repeat-containing protein 73 (Lrrc73) from Rattus norvegicus (Rat).